The following is a 208-amino-acid chain: Urease accessory protein UreE (208 aa).

The disordered stretch occupies residues 145–165; the sequence is EGGAYSAGGHGHTHAPAATPV.

The protein belongs to the UreE family.

The protein localises to the cytoplasm. Involved in urease metallocenter assembly. Binds nickel. Probably functions as a nickel donor during metallocenter assembly. In Polaromonas naphthalenivorans (strain CJ2), this protein is Urease accessory protein UreE.